Here is a 374-residue protein sequence, read N- to C-terminus: Tetraacyldisaccharide 4'-kinase (374 aa).

T59 to T66 is an ATP binding site.

This sequence belongs to the LpxK family.

It catalyses the reaction a lipid A disaccharide + ATP = a lipid IVA + ADP + H(+). It participates in glycolipid biosynthesis; lipid IV(A) biosynthesis; lipid IV(A) from (3R)-3-hydroxytetradecanoyl-[acyl-carrier-protein] and UDP-N-acetyl-alpha-D-glucosamine: step 6/6. Transfers the gamma-phosphate of ATP to the 4'-position of a tetraacyldisaccharide 1-phosphate intermediate (termed DS-1-P) to form tetraacyldisaccharide 1,4'-bis-phosphate (lipid IVA). This is Tetraacyldisaccharide 4'-kinase from Elusimicrobium minutum (strain Pei191).